Consider the following 685-residue polypeptide: Polyphosphate kinase (685 aa).

Residue Asn45 participates in ATP binding. Mg(2+)-binding residues include Arg375 and Arg405. The Phosphohistidine intermediate role is filled by His435. ATP is bound by residues Tyr468, Arg564, and His592.

It belongs to the polyphosphate kinase 1 (PPK1) family. The cofactor is Mg(2+). In terms of processing, an intermediate of this reaction is the autophosphorylated ppk in which a phosphate is covalently linked to a histidine residue through a N-P bond.

It carries out the reaction [phosphate](n) + ATP = [phosphate](n+1) + ADP. Catalyzes the reversible transfer of the terminal phosphate of ATP to form a long-chain polyphosphate (polyP). The sequence is that of Polyphosphate kinase from Neisseria meningitidis serogroup B (strain ATCC BAA-335 / MC58).